The chain runs to 267 residues: Probable 6-oxopurine nucleoside phosphorylase (267 aa).

Residues Ser-10, 50-51 (RH), and 83-84 (SA) contribute to the phosphate site. Met-188 contributes to the substrate binding site. Thr-189 contributes to the phosphate binding site. 212–214 (NYA) provides a ligand contact to substrate.

It belongs to the PNP/MTAP phosphorylase family. MTAP subfamily. As to quaternary structure, homohexamer. Dimer of a homotrimer.

The catalysed reaction is a purine D-ribonucleoside + phosphate = a purine nucleobase + alpha-D-ribose 1-phosphate. The enzyme catalyses guanosine + phosphate = alpha-D-ribose 1-phosphate + guanine. It carries out the reaction inosine + phosphate = alpha-D-ribose 1-phosphate + hypoxanthine. It participates in purine metabolism; purine nucleoside salvage. Purine nucleoside phosphorylase which is highly specific for 6-oxopurine nucleosides. Cleaves guanosine or inosine to respective bases and sugar-1-phosphate molecules. Involved in purine salvage. In Thermococcus kodakarensis (strain ATCC BAA-918 / JCM 12380 / KOD1) (Pyrococcus kodakaraensis (strain KOD1)), this protein is Probable 6-oxopurine nucleoside phosphorylase.